Reading from the N-terminus, the 713-residue chain is Acetyl-coenzyme A synthetase 1 (713 aa).

Residues 1-39 (MSPSAVQSSKLEEQSSEIDKLKAKMSQSAATAQQKKEHE) form a disordered region. A compositionally biased stretch (basic and acidic residues) spans 10-22 (KLEEQSSEIDKLK). CoA-binding positions include 248–251 (RGGK) and Thr-367. ATP is bound by residues 443-445 (GEP), 467-472 (DTYWQT), Asp-559, and Arg-574. Positions 552-600 (PGYYFTGDGAAKDKDGYIWILGRVDDVVNVSGHRLSTAEIEAAIIEDPI) match the FACS motif. Position 582 (Ser-582) interacts with CoA. Arg-585 serves as a coordination point for ATP. Arg-650 contacts CoA. Positions 711–713 (VKL) match the Microbody targeting signal motif.

Belongs to the ATP-dependent AMP-binding enzyme family.

The protein localises to the microsome. It localises to the cytoplasm. Its subcellular location is the mitochondrion. It is found in the nucleus. It carries out the reaction acetate + ATP + CoA = acetyl-CoA + AMP + diphosphate. Catalyzes the production of acetyl-CoA. Provides the acetyl-CoA source for histone acetylation in the nucleus. 'Aerobic' isozyme of acetyl-coenzyme A synthetase, which supports growth on nonfermentable carbon sources such as glycerol and ethanol. May be required for assimilation of ethanol and acetate. In Saccharomyces cerevisiae (strain ATCC 204508 / S288c) (Baker's yeast), this protein is Acetyl-coenzyme A synthetase 1 (ACS1).